Reading from the N-terminus, the 140-residue chain is Large ribosomal subunit protein uL16 (140 aa).

It belongs to the universal ribosomal protein uL16 family. As to quaternary structure, part of the 50S ribosomal subunit.

Its function is as follows. Binds 23S rRNA and is also seen to make contacts with the A and possibly P site tRNAs. The polypeptide is Large ribosomal subunit protein uL16 (Onion yellows phytoplasma (strain OY-M)).